Here is a 180-residue protein sequence, read N- to C-terminus: Shikimate kinase (180 aa).

14–19 (GAGKTC) lines the ATP pocket. Threonine 18 provides a ligand contact to Mg(2+). Substrate is bound by residues aspartate 36, arginine 60, and glycine 82. Residue arginine 120 participates in ATP binding. Arginine 139 lines the substrate pocket.

Belongs to the shikimate kinase family. As to quaternary structure, monomer. Mg(2+) serves as cofactor.

It localises to the cytoplasm. The enzyme catalyses shikimate + ATP = 3-phosphoshikimate + ADP + H(+). It participates in metabolic intermediate biosynthesis; chorismate biosynthesis; chorismate from D-erythrose 4-phosphate and phosphoenolpyruvate: step 5/7. In terms of biological role, catalyzes the specific phosphorylation of the 3-hydroxyl group of shikimic acid using ATP as a cosubstrate. This chain is Shikimate kinase, found in Stenotrophomonas maltophilia (strain K279a).